We begin with the raw amino-acid sequence, 407 residues long: Cysteine desulfurase (407 aa).

Position 226 is an N6-(pyridoxal phosphate)lysine (K226). The active-site Cysteine persulfide intermediate is the C364.

Belongs to the class-V pyridoxal-phosphate-dependent aminotransferase family. Csd subfamily. As to quaternary structure, homodimer. Interacts with SufE and the SufBCD complex composed of SufB, SufC and SufD. The interaction with SufE is required to mediate the direct transfer of the sulfur atom from the S-sulfanylcysteine. Pyridoxal 5'-phosphate is required as a cofactor.

It is found in the cytoplasm. The enzyme catalyses (sulfur carrier)-H + L-cysteine = (sulfur carrier)-SH + L-alanine. It catalyses the reaction L-selenocysteine + AH2 = hydrogenselenide + L-alanine + A + H(+). Its pathway is cofactor biosynthesis; iron-sulfur cluster biosynthesis. In terms of biological role, cysteine desulfurases mobilize the sulfur from L-cysteine to yield L-alanine, an essential step in sulfur metabolism for biosynthesis of a variety of sulfur-containing biomolecules. Component of the suf operon, which is activated and required under specific conditions such as oxidative stress and iron limitation. Acts as a potent selenocysteine lyase in vitro, that mobilizes selenium from L-selenocysteine. Selenocysteine lyase activity is however unsure in vivo. This Pectobacterium carotovorum subsp. carotovorum (strain PC1) protein is Cysteine desulfurase.